A 656-amino-acid chain; its full sequence is Anion exchange transporter (656 aa).

Residues 1 to 75 (MTGAKRKKRS…LSFAMLSSVH (75 aa)) lie on the Cytoplasmic side of the membrane. A helical transmembrane segment spans residues 76-96 (PVFGLYGSLFPAIIYAIFGMG). Residues 97–144 (RHVATGTFALTSLISANAVERLVPQSSRNLTTQSNSSVLGLSEFELQR) are Extracellular-facing. A helical membrane pass occupies residues 145 to 165 (IGVAAAVSFLGGVIQLVMFVL). Residue Q166 is a topological domain, cytoplasmic. A helical membrane pass occupies residues 167-187 (LGSATFLLTEPVISAMTTGAA). Over 188–199 (THVVTSQVKYLL) the chain is Extracellular. The helical transmembrane segment at 200-220 (GIKMPYISGPLGFFYIYAYVF) threads the bilayer. Residues 221–222 (EN) are Cytoplasmic-facing. The helical transmembrane segment at 223-243 (IKSVQLEALLFSLLSIIVLVL) threads the bilayer. Residues 244–254 (VKELNEQFKRK) lie on the Extracellular side of the membrane. Residues 255–275 (IKVVLPVDLVLIIAASFACYC) traverse the membrane as a helical segment. Residues 276–306 (TNMENTYGLEVVGHIPNGIPPPRAPPMNILS) are Cytoplasmic-facing. Residues 307 to 327 (AVLTEAFGVALVGYVASLALA) form a helical membrane-spanning segment. Residues 328-343 (QGSAKKFKYSVDDNQE) are Extracellular-facing. A helical transmembrane segment spans residues 344 to 364 (FLAHGLSNVIPSFLFCIPSAA). The Cytoplasmic portion of the chain corresponds to 365–383 (AMGRTAGLYSTGAKTQVAC). The next 2 helical transmembrane spans lie at 384 to 404 (LISCIFVLIVIYAIGPLLYWL) and 405 to 425 (PMCVLASIIVVGLKGMLIQFR). At 426–448 (DLKKYWNVDKIDWGIWISTYIFT) the chain is on the extracellular side. Residues 449–469 (ICFAANVGLLFGVICTIAIVL) form a helical membrane-spanning segment. Residues 470–656 (GRFPRAKTLS…LSKASDHSEV (187 aa)) are Cytoplasmic-facing. Residues 492 to 641 (TEMHDETSQQ…DSVPAAISII (150 aa)) form the STAS domain. A membrane targeting region spans residues 641-656 (IQSNKNLSKASDHSEV).

It belongs to the SLC26A/SulP transporter (TC 2.A.53) family. In terms of tissue distribution, expressed in the Reissner's membrane epithelial cells in the cochlea (at protein level). Expressed in the retinal pigment epithelium (at protein level). Abundantly expressed in parietal cells on the glandular portion of the stomach. Lower levels are observed in the kidney, with expression in the proximal tubule and thick ascending limb of the loop of Henle. Also expressed in distal segments of nephron, in extraglomerular mesagial cells and a subpopulation of intercalated cells of outer medullary collecting ducts. Expressed in the thyroid gland.

Its subcellular location is the basolateral cell membrane. The protein resides in the recycling endosome membrane. The protein localises to the apical cell membrane. It is found in the lateral cell membrane. It carries out the reaction chloride(in) = chloride(out). It catalyses the reaction iodide(out) = iodide(in). The enzyme catalyses bromide(in) = bromide(out). The catalysed reaction is oxalate(in) = oxalate(out). It carries out the reaction nitrate(in) = nitrate(out). It catalyses the reaction sulfate(in) = sulfate(out). The enzyme catalyses hydrogencarbonate(in) = hydrogencarbonate(out). The catalysed reaction is D-gluconate(in) = D-gluconate(out). It carries out the reaction thiocyanate(in) = thiocyanate(out). It catalyses the reaction hydrogencarbonate(in) + chloride(out) = hydrogencarbonate(out) + chloride(in). Its activity is regulated as follows. Regulated by pH. Activity inhibited by all inhibitors of several anion channels and transporters, including 4,4'-Di-isothiocyanatostilbene-2,2'-disulfonic acid (DIDS), diphenylamine-2-carboxylic acid, glybenclamide and 5-Nitro-2-(3-phenylpropyl-amino)benzoic acid. Functionally, acts as an anion channel mediating the transport of chloride, bromide, iodide, nitrate, sulfate, gluconate, thiocyanate and bicarbonate ions. Its permeability towards bicarbonate is weak and increases when pH is above 7. Mediates oxalate transport. Mediates thiocyanate transport in retinal pigment epithelium cells. Mediates iodide transport in the thyroid gland, playing an important role in the synthesis of thyroid hormones and the maintenance of thyroid function. Although it is an anion channel, according to PubMed:12736153 and PubMed:19723628 it has been shown to exhibit chloride-bicarbonate exchanger activity. The polypeptide is Anion exchange transporter (Mus musculus (Mouse)).